A 346-amino-acid polypeptide reads, in one-letter code: NADH-ubiquinone oxidoreductase chain 2 (346 aa).

Transmembrane regions (helical) follow at residues methionine 1–isoleucine 21, histidine 25–serine 45, phenylalanine 60–alanine 80, methionine 96–proline 116, leucine 124–methionine 144, leucine 149–glycine 169, isoleucine 178–proline 198, leucine 200–asparagine 220, alanine 242–proline 262, glutamate 274–leucine 294, and isoleucine 325–alanine 345.

This sequence belongs to the complex I subunit 2 family.

The protein localises to the mitochondrion inner membrane. The enzyme catalyses a ubiquinone + NADH + 5 H(+)(in) = a ubiquinol + NAD(+) + 4 H(+)(out). Its function is as follows. Core subunit of the mitochondrial membrane respiratory chain NADH dehydrogenase (Complex I) that is believed to belong to the minimal assembly required for catalysis. Complex I functions in the transfer of electrons from NADH to the respiratory chain. The immediate electron acceptor for the enzyme is believed to be ubiquinone. In Struthio camelus (Common ostrich), this protein is NADH-ubiquinone oxidoreductase chain 2 (MT-ND2).